Reading from the N-terminus, the 165-residue chain is Ribosome maturation factor RimM (165 aa).

The region spanning 92-163 (EARHYWADLE…RVVVDPPEGL (72 aa)) is the PRC barrel domain.

Belongs to the RimM family. As to quaternary structure, binds ribosomal protein uS19.

It is found in the cytoplasm. In terms of biological role, an accessory protein needed during the final step in the assembly of 30S ribosomal subunit, possibly for assembly of the head region. Essential for efficient processing of 16S rRNA. May be needed both before and after RbfA during the maturation of 16S rRNA. It has affinity for free ribosomal 30S subunits but not for 70S ribosomes. This chain is Ribosome maturation factor RimM, found in Anaeromyxobacter sp. (strain Fw109-5).